Here is a 466-residue protein sequence, read N- to C-terminus: Asparagine--tRNA ligase (466 aa).

It belongs to the class-II aminoacyl-tRNA synthetase family. In terms of assembly, homodimer.

It localises to the cytoplasm. The catalysed reaction is tRNA(Asn) + L-asparagine + ATP = L-asparaginyl-tRNA(Asn) + AMP + diphosphate + H(+). This Shewanella baltica (strain OS195) protein is Asparagine--tRNA ligase.